The primary structure comprises 674 residues: MATARLPSRSFLSPAQQSYPRLPASVRLCLSHHEQPPTGPKRHRRAATSHPAFSAAARGRAKKIPIADTDEPAAGVRVTDRGISYRLDGAPFEFQYSYTEAPRARPVALREAPFMPFGPEATPRPWTGRKPLPKSRKELPEFDSFVLPAPGKKGVKPVQSPGPFLAGMEPRYQSVSREDILGEPLTKEEVSELVKGSLKSKRQLNMGRDGLTHNMLENIHSHWKRKRVCKIKCKGVCTIDMDNICHQLEEKVGGKVIHRQGGVIFLFRGRNYNYRTRPCFPLMLWKPVAPVYPRLVTKVPGGLTPDEATEMRTRGHQLPPICKLGKNGVYANLVNQVREAFEACDLVRVDCSGLNKSDCRKIGAKLKDLVPCILLSFEFEHILMWRGSDWKSSLPPLENSYEVTKVQESFSGKESNEKVTHSGNVLAQIELVSAATSHKNWNLDEGQEKFKDSTDSDMVLNSAKDVPALFHSTGISRTEPSADIPLEYSPLNPVCDIMDPSLNCRSIPTNNCESRALVEKSEHCPDDYNLEMKRKRNDGTKGTVVLNSGSKVEGLLCLLEQAIHSGRALVLSEDELADSDLVYEKSVAFTKSIPRRLVFENTRRKSSARRNVPDNHARTKTHLVENKMLSSPVENKFIVNGGSAMQTIDHGQEFLSDVVHQGTLRVDELAKLLA.

The N-terminal 54 residues, 1–54 (MATARLPSRSFLSPAQQSYPRLPASVRLCLSHHEQPPTGPKRHRRAATSHPAFS), are a transit peptide targeting the chloroplast. A disordered region spans residues 31 to 61 (SHHEQPPTGPKRHRRAATSHPAFSAAARGRA). Residues 48-57 (TSHPAFSAAA) show a composition bias toward low complexity. CRM domains follow at residues 183–279 (EPLT…TRPC) and 301–397 (GGLT…LPPL). The CRS2 binding stretch occupies residues 554–576 (GLLCLLEQAIHSGRALVLSEDEL).

As to quaternary structure, interacts with CRS2 and RNA. Part of large ribonucleo-protein complexes that include group IIB introns, CRS2 and CAF1.

It localises to the plastid. The protein resides in the chloroplast stroma. Functionally, required for the splicing of group IIB introns in chloroplasts. Forms splicing particles with CRS2. Interacts with RNA and confers intron specificity of the splicing particles. The chain is CRS2-associated factor 1, chloroplastic (CAF1) from Zea mays (Maize).